Here is an 82-residue protein sequence, read N- to C-terminus: ATP synthase subunit c (82 aa).

2 helical membrane passes run 7–27 and 53–73; these read FVALAAGLIIGLGAVGACIGI and FLLAGLIDAAFLIGVGIAMMF.

This sequence belongs to the ATPase C chain family. In terms of assembly, F-type ATPases have 2 components, F(1) - the catalytic core - and F(0) - the membrane proton channel. F(1) has five subunits: alpha(3), beta(3), gamma(1), delta(1), epsilon(1). F(0) has three main subunits: a(1), b(2) and c(10-14). The alpha and beta chains form an alternating ring which encloses part of the gamma chain. F(1) is attached to F(0) by a central stalk formed by the gamma and epsilon chains, while a peripheral stalk is formed by the delta and b chains.

It localises to the cell inner membrane. In terms of biological role, f(1)F(0) ATP synthase produces ATP from ADP in the presence of a proton or sodium gradient. F-type ATPases consist of two structural domains, F(1) containing the extramembraneous catalytic core and F(0) containing the membrane proton channel, linked together by a central stalk and a peripheral stalk. During catalysis, ATP synthesis in the catalytic domain of F(1) is coupled via a rotary mechanism of the central stalk subunits to proton translocation. Key component of the F(0) channel; it plays a direct role in translocation across the membrane. A homomeric c-ring of between 10-14 subunits forms the central stalk rotor element with the F(1) delta and epsilon subunits. This chain is ATP synthase subunit c, found in Polaromonas sp. (strain JS666 / ATCC BAA-500).